Consider the following 1405-residue polypeptide: Protein translocase subunit SecA (1405 aa).

Residues 1 to 1099 (MHMKIKKFKK…SDYKKLNEDE (1099 aa)) are protein translocase subunit SecA. Residues Gln-88, 106–110 (GEGKS), and Asp-494 contribute to the ATP site. The interval 1100–1405 (SDDDIKAFYK…LDYLKENNKK (306 aa)) is unknown.

This sequence belongs to the SecA family. In terms of assembly, monomer and homodimer. Part of the essential Sec protein translocation apparatus which comprises SecA, SecYEG and auxiliary proteins SecDF. Other proteins may also be involved.

The protein resides in the cell membrane. Its subcellular location is the cytoplasm. The enzyme catalyses ATP + H2O + cellular proteinSide 1 = ADP + phosphate + cellular proteinSide 2.. Its function is as follows. Part of the Sec protein translocase complex. Interacts with the SecYEG preprotein conducting channel. Has a central role in coupling the hydrolysis of ATP to the transfer of proteins into and across the cell membrane, serving as an ATP-driven molecular motor driving the stepwise translocation of polypeptide chains across the membrane. The polypeptide is Protein translocase subunit SecA (Malacoplasma penetrans (strain HF-2) (Mycoplasma penetrans)).